A 414-amino-acid polypeptide reads, in one-letter code: Probable 1-acylglycerol-3-phosphate O-acyltransferase (414 aa).

Residues 117–382 enclose the AB hydrolase-1 domain; sequence PTLVMVHGYG…GGHFVFIDNP (266 aa). The short motif at 193-197 is the GXSXG element; that stretch reads GHSFG. Residues 375-380 carry the HXXXXD motif motif; that stretch reads HFVFID.

This sequence belongs to the peptidase S33 family. ABHD4/ABHD5 subfamily.

The protein localises to the cytoplasm. The enzyme catalyses a 1-acyl-sn-glycero-3-phosphate + an acyl-CoA = a 1,2-diacyl-sn-glycero-3-phosphate + CoA. Lysophosphatidic acid acyltransferase which functions in phosphatidic acid biosynthesis. May regulate neutral lipid accumulation and participate in the regulation of lipid turnover in vegetative cells. May possess additional triacylglycerol lipase and phospholipase A2 activities in vitro. This is Probable 1-acylglycerol-3-phosphate O-acyltransferase from Oryza sativa subsp. japonica (Rice).